The sequence spans 508 residues: Cytochrome P450 4A12B (508 aa).

A signal peptide spans 1 to 37 (MSASALSSIRFPGSISEYLQVASVLSLLLLLFKTAQL). 2 residues coordinate heme: Glu319 and Cys455.

The protein belongs to the cytochrome P450 family. Requires heme as cofactor. Expressed in lung, but almost undetectable in the kidneys of five different strains.

The protein resides in the endoplasmic reticulum membrane. It is found in the microsome membrane. The enzyme catalyses an organic molecule + reduced [NADPH--hemoprotein reductase] + O2 = an alcohol + oxidized [NADPH--hemoprotein reductase] + H2O + H(+). It catalyses the reaction dodecanoate + reduced [NADPH--hemoprotein reductase] + O2 = 11-hydroxydodecanoate + oxidized [NADPH--hemoprotein reductase] + H2O + H(+). The catalysed reaction is dodecanoate + reduced [NADPH--hemoprotein reductase] + O2 = 12-hydroxydodecanoate + oxidized [NADPH--hemoprotein reductase] + H2O + H(+). It carries out the reaction (5Z,8Z,11Z,14Z)-eicosatetraenoate + reduced [NADPH--hemoprotein reductase] + O2 = 18-hydroxy-(5Z,8Z,11Z,14Z)-eicosatetraenoate + oxidized [NADPH--hemoprotein reductase] + H2O + H(+). The enzyme catalyses (5Z,8Z,11Z,14Z)-eicosatetraenoate + reduced [NADPH--hemoprotein reductase] + O2 = 19-hydroxy-(5Z,8Z,11Z,14Z)-eicosatetraenoate + oxidized [NADPH--hemoprotein reductase] + H2O + H(+). It catalyses the reaction (5Z,8Z,11Z,14Z)-eicosatetraenoate + reduced [NADPH--hemoprotein reductase] + O2 = 20-hydroxy-(5Z,8Z,11Z,14Z)-eicosatetraenoate + oxidized [NADPH--hemoprotein reductase] + H2O + H(+). The catalysed reaction is (5Z,8Z,11Z,14Z,17Z)-eicosapentaenoate + reduced [NADPH--hemoprotein reductase] + O2 = 19-hydroxy-(5Z,8Z,11Z,14Z,17Z)-eicosapentaenoate + oxidized [NADPH--hemoprotein reductase] + H2O + H(+). It carries out the reaction (5Z,8Z,11Z,14Z,17Z)-eicosapentaenoate + reduced [NADPH--hemoprotein reductase] + O2 = 20-hydroxy-(5Z,8Z,11Z,14Z,17Z)-eicosapentaenoate + oxidized [NADPH--hemoprotein reductase] + H2O + H(+). The enzyme catalyses (5Z,8Z,11Z,14Z,17Z)-eicosapentaenoate + reduced [NADPH--hemoprotein reductase] + O2 = (17S,18R)-epoxy-(5Z,8Z,11Z,14Z)-eicosatetraenoate + oxidized [NADPH--hemoprotein reductase] + H2O + H(+). It catalyses the reaction (5Z,8Z,11Z,14Z,17Z)-eicosapentaenoate + reduced [NADPH--hemoprotein reductase] + O2 = (17R,18S)-epoxy-(5Z,8Z,11Z,14Z)-eicosatetraenoate + oxidized [NADPH--hemoprotein reductase] + H2O + H(+). It participates in lipid metabolism; fatty acid metabolism. Its activity is regulated as follows. Activated by cytochrome b5. The Vmax almost doubles in the presence of cytochrome b5. A cytochrome P450 monooxygenase involved in the metabolism of fatty acids and their oxygenated derivatives (oxylipins). Mechanistically, uses molecular oxygen inserting one oxygen atom into a substrate, and reducing the second into a water molecule, with two electrons provided by NADPH via cytochrome P450 reductase (CPR; NADPH-ferrihemoprotein reductase). Catalyzes predominantly the oxidation of the terminal carbon (omega-oxidation) of saturated and unsaturated fatty acids. May act as a major omega-hydroxylase for dodecanoic (lauric) acid in kidney. Participates in omega-hydroxylation of (5Z,8Z,11Z,14Z)-eicosatetraenoic acid (arachidonate) to 20-hydroxyeicosatetraenoic acid (20-HETE), a signaling molecule acting both as vasoconstrictive and natriuretic with overall effect on arterial blood pressure. Acts as an omega-hydroxylase and epoxidase toward (5Z,8Z,11Z,14Z,17Z)-eicosapentaenoc acid (EPA). Catalyzes the epoxidation of the last double bond of EPA with no preferred stereoselectivity, producing both (R,S) and (S,R) stereoisomers. Can also catalyze the omega-1 and omega-2 oxidation of fatty acids with lower efficiency. The protein is Cytochrome P450 4A12B of Mus musculus (Mouse).